Reading from the N-terminus, the 396-residue chain is Elongation factor Tu (396 aa).

Residues 10-206 (KPHVNVGTIG…ALDTYIPEPE (197 aa)) form the tr-type G domain. The tract at residues 19–26 (GHVDHGKT) is G1. 19–26 (GHVDHGKT) contacts GTP. A Mg(2+)-binding site is contributed by T26. The segment at 60 to 64 (GITIN) is G2. The segment at 81 to 84 (DCPG) is G3. GTP is bound by residues 81–85 (DCPGH) and 136–139 (NKCD). A G4 region spans residues 136–139 (NKCD). Residues 174-176 (SAL) are G5.

It belongs to the TRAFAC class translation factor GTPase superfamily. Classic translation factor GTPase family. EF-Tu/EF-1A subfamily. In terms of assembly, monomer.

It localises to the cytoplasm. The catalysed reaction is GTP + H2O = GDP + phosphate + H(+). In terms of biological role, GTP hydrolase that promotes the GTP-dependent binding of aminoacyl-tRNA to the A-site of ribosomes during protein biosynthesis. The protein is Elongation factor Tu of Acinetobacter baylyi (strain ATCC 33305 / BD413 / ADP1).